Reading from the N-terminus, the 141-residue chain is MAKKVVSVIKLALQAGKANPAPPVGPALGQHGVNIMAFCKEYNARTQDKAGLVIPVEISVFEDRSFTFITKTPPASVLITKAAGIEKGSGESAHGKVGSLSRSQLEEIAKTKLPDLNCTSIESAMRIIEGTARNMGVSISD.

It belongs to the universal ribosomal protein uL11 family. Part of the ribosomal stalk of the 50S ribosomal subunit. Interacts with L10 and the large rRNA to form the base of the stalk. L10 forms an elongated spine to which L12 dimers bind in a sequential fashion forming a multimeric L10(L12)X complex. In terms of processing, one or more lysine residues are methylated.

Forms part of the ribosomal stalk which helps the ribosome interact with GTP-bound translation factors. The chain is Large ribosomal subunit protein uL11 from Prochlorococcus marinus (strain MIT 9313).